Reading from the N-terminus, the 214-residue chain is RING-H2 finger protein ATL67 (214 aa).

The helical transmembrane segment at 33–53 (LGFGYSIAIALGFLVLLSTVL) threads the bilayer. Residues 138-180 (CSICLCEYKEAEMLRMMPECKHYFHLCCLDAWLKLNGSCPVCR) form an RING-type; atypical zinc finger.

This sequence belongs to the RING-type zinc finger family. ATL subfamily.

It localises to the membrane. The catalysed reaction is S-ubiquitinyl-[E2 ubiquitin-conjugating enzyme]-L-cysteine + [acceptor protein]-L-lysine = [E2 ubiquitin-conjugating enzyme]-L-cysteine + N(6)-ubiquitinyl-[acceptor protein]-L-lysine.. The protein operates within protein modification; protein ubiquitination. The chain is RING-H2 finger protein ATL67 (ATL67) from Arabidopsis thaliana (Mouse-ear cress).